A 183-amino-acid polypeptide reads, in one-letter code: Protein Dr1 (183 aa).

The Histone-fold domain maps to 19 to 82 (TLPRASINKI…INAEHVLEAL (64 aa)). The repression of TATA-containing promoters stretch occupies residues 92 to 183 (QEAEAVLHDC…DDDDDDDDDY (92 aa)). The interval 155 to 183 (AMVQRPPLADGSVASKPSEDDDDDDDDDY) is disordered. Over residues 173-183 (EDDDDDDDDDY) the composition is skewed to acidic residues.

The protein belongs to the NC2 beta/DR1 family. In terms of assembly, component of the Ada2a-containing (ATAC) complex composed of at least Ada2a, Atac1, Hcf, Ada3, Gcn5, Mocs2B, Charac-14, Atac3, Atac2, NC2beta and wds. Homodimer. Interacts with NC2-alpha/Drap1 to form the dNC2 complex.

The protein localises to the nucleus. In terms of biological role, bifunctional basic transcription factor. Activates transcription of DPE (Downstream Promoter Element) containing promoters while repressing transcription of promoters which contain TATA elements. Together with Chrac-14, promotes nucleosome sliding of ATP-dependent nucleosome remodeling complexes. This is Protein Dr1 (NC2beta) from Drosophila melanogaster (Fruit fly).